Reading from the N-terminus, the 561-residue chain is Putative transport protein YbjL (561 aa).

The next 5 membrane-spanning stretches (helical) occupy residues 8–28 (LLNG…LCLG), 32–52 (LGSI…LLGQ), 66–86 (FMLF…SIFF), 94–114 (MLAL…GKLF), and 158–178 (NLSL…IVGA). 2 consecutive RCK C-terminal domains span residues 200–288 (RGLD…SFRN) and 292–373 (VFDR…RIGF). 5 helical membrane-spanning segments follow: residues 383 to 403 (LLAF…TFQF), 406 to 426 (FSFG…LGFM), 451 to 471 (VFMA…LGAI), 475 to 495 (MLIA…LFGA), and 540 to 560 (AIAN…WPGL).

This sequence belongs to the AAE transporter (TC 2.A.81) family. YbjL subfamily.

The protein localises to the cell membrane. This chain is Putative transport protein YbjL, found in Escherichia coli O139:H28 (strain E24377A / ETEC).